A 374-amino-acid chain; its full sequence is Putative L-lysine 2,3-aminomutase aq_1632 (374 aa).

A Radical SAM core domain is found at 86-314; the sequence is HKYPDTALLL…ARVRYVMSHE (229 aa). [4Fe-4S] cluster is bound by residues C100, C104, and C107. K317 carries the N6-(pyridoxal phosphate)lysine modification.

This sequence belongs to the radical SAM superfamily. KamA family. [4Fe-4S] cluster is required as a cofactor. Requires pyridoxal 5'-phosphate as cofactor.

This is Putative L-lysine 2,3-aminomutase aq_1632 from Aquifex aeolicus (strain VF5).